The sequence spans 499 residues: Hepatic triacylglycerol lipase (499 aa).

The first 21 residues, 1 to 21 (MGSPLCVPIFLAVCILIQSST), serve as a signal peptide directing secretion. Residue Asn-78 is glycosylated (N-linked (GlcNAc...) asparagine). Ser-168 (nucleophile) is an active-site residue. The Charge relay system role is filled by Asp-194. The essential for determining substrate specificity stretch occupies residues 254 to 277 (CHFLELYKHIAQHGLNALSQTIKC). Catalysis depends on His-279, which acts as the Charge relay system. Residues 352–486 (YHYQFKIQFI…HPTQEKNFVR (135 aa)) form the PLAT domain. The N-linked (GlcNAc...) asparagine glycan is linked to Asn-397.

This sequence belongs to the AB hydrolase superfamily. Lipase family. Homodimer.

It localises to the secreted. The catalysed reaction is a triacylglycerol + H2O = a diacylglycerol + a fatty acid + H(+). It catalyses the reaction a 1-acyl-sn-glycero-3-phosphocholine + H2O = sn-glycerol 3-phosphocholine + a fatty acid + H(+). The enzyme catalyses a 1,2-diacyl-sn-glycero-3-phosphocholine + H2O = a 2-acyl-sn-glycero-3-phosphocholine + a fatty acid + H(+). It carries out the reaction 1,2,3-tri-(9Z-octadecenoyl)-glycerol + H2O = di-(9Z)-octadecenoylglycerol + (9Z)-octadecenoate + H(+). The catalysed reaction is 1,2-di-(9Z-octadecenoyl)-sn-glycero-3-phosphocholine + H2O = (9Z-octadecenoyl)-sn-glycero-3-phosphocholine + (9Z)-octadecenoate + H(+). It catalyses the reaction 1,2,3-tributanoylglycerol + H2O = dibutanoylglycerol + butanoate + H(+). The enzyme catalyses 1,2-dihexadecanoyl-sn-glycero-3-phosphocholine + H2O = hexadecanoyl-sn-glycero-3-phosphocholine + hexadecanoate + H(+). It carries out the reaction 1,2-di-(9Z-octadecenoyl)-sn-glycerol + H2O = 2-(9Z-octadecenoyl)-glycerol + (9Z)-octadecenoate + H(+). The catalysed reaction is 1,2,3-tri-(9Z-octadecenoyl)-glycerol + H2O = 2,3-di-(9Z)-octadecenoyl-sn-glycerol + (9Z)-octadecenoate + H(+). It catalyses the reaction 1-(9Z-octadecenoyl)-sn-glycero-3-phospho-L-serine + H2O = sn-glycero-3-phospho-L-serine + (9Z)-octadecenoate + H(+). The enzyme catalyses 1-hexadecanoyl-sn-glycero-3-phosphocholine + H2O = sn-glycerol 3-phosphocholine + hexadecanoate + H(+). It carries out the reaction 1,3-di-(9Z-octadecenoyl)-glycerol + H2O = 3-(9Z-octadecenoyl)-sn-glycerol + (9Z)-octadecenoate + H(+). Catalyzes the hydrolysis of triglycerides and phospholipids present in circulating plasma lipoproteins, including chylomicrons, intermediate density lipoproteins (IDL), low density lipoproteins (LDL) of large size and high density lipoproteins (HDL), releasing free fatty acids (FFA) and smaller lipoprotein particles. Also exhibits lysophospholipase activity. Can hydrolyze both neutral lipid and phospholipid substrates but shows a greater binding affinity for neutral lipid substrates than phospholipid substrates. In native LDL, preferentially hydrolyzes the phosphatidylcholine species containing polyunsaturated fatty acids at sn-2 position. The polypeptide is Hepatic triacylglycerol lipase (LIPC) (Oryctolagus cuniculus (Rabbit)).